Consider the following 340-residue polypeptide: Mitotic checkpoint protein BUB3.1 (340 aa).

The interval 1–20 (MTTVTPSAGRELSNPPSDGI) is disordered. WD repeat units follow at residues 15–54 (PPSD…LKGE), 96–135 (THDK…GPER), 142–179 (LQPE…QPEQ), 239–278 (DIVY…RLYQ), and 281–324 (KYPT…RSVN).

The protein belongs to the WD repeat BUB3 family. As to quaternary structure, part of the mitotic checkpoint complex (MCC); interacts with CDC20-1 and CDC20-2. Interacts with MAD2 and BUBR1. In terms of tissue distribution, expressed in actively dividing tissues, early in organ development, in young leaves, lateral root primordia and root meristems, flower buds, flowers and siliques.

Its subcellular location is the nucleus. It is found in the chromosome. It localises to the centromere. The protein resides in the kinetochore. The protein localises to the cytoplasm. Its subcellular location is the cytoskeleton. It is found in the phragmoplast. It localises to the spindle. Functionally, has a dual function in spindle-assembly checkpoint signaling and in promoting the establishment of correct kinetochore-microtubule (K-MT) attachments. Promotes the formation of stable end-on bipolar attachments. Necessary for kinetochore localization of BUB1. The BUB1/BUB3 complex plays a role in the inhibition of anaphase-promoting complex or cyclosome (APC/C) when spindle-assembly checkpoint is activated and inhibits the ubiquitin ligase activity of APC/C by phosphorylating its activator CDC20. Essential for gametophyte development. The polypeptide is Mitotic checkpoint protein BUB3.1 (BUB3.1) (Arabidopsis thaliana (Mouse-ear cress)).